A 428-amino-acid polypeptide reads, in one-letter code: Homocitrate synthase, cytosolic isozyme (428 aa).

A Pyruvate carboxyltransferase domain is found at 23–276 (FQLIDSTLRE…KSKYKLHKIR (254 aa)). Arg-31 contacts 2-oxoglutarate. Position 32 (Glu-32) interacts with Mg(2+). 2-oxoglutarate is bound by residues His-91, Arg-151, and Thr-185. The Mg(2+) site is built by His-212 and His-214. His-309 serves as the catalytic Proton acceptor. Ser-385 carries the post-translational modification Phosphoserine. Residue Thr-396 is modified to Phosphothreonine. Positions 399–428 (VLSAKKNKKNDSDVPELATIPAAKRTKPSA) are disordered. Ser-401 and Ser-410 each carry phosphoserine.

Belongs to the alpha-IPM synthase/homocitrate synthase family. Homocitrate synthase LYS20/LYS21 subfamily. Mg(2+) serves as cofactor. Requires Mn(2+) as cofactor.

The protein resides in the cytoplasm. The enzyme catalyses acetyl-CoA + 2-oxoglutarate + H2O = (2R)-homocitrate + CoA + H(+). It participates in amino-acid biosynthesis; L-lysine biosynthesis via AAA pathway; L-alpha-aminoadipate from 2-oxoglutarate: step 1/5. Functionally, catalyzes the aldol-type condensation of 2-oxoglutarate with acetyl-CoA to yield homocitrate. Carries out the first step of the alpha-aminoadipate (AAA) lysine biosynthesis pathway. The sequence is that of Homocitrate synthase, cytosolic isozyme (LYS20) from Saccharomyces cerevisiae (strain ATCC 204508 / S288c) (Baker's yeast).